Consider the following 334-residue polypeptide: Protein-glutamate methylesterase FrzG (334 aa).

The 188-residue stretch at 147–334 (PYPLVAIAAS…AALMQWVDVC (188 aa)) folds into the CheB-type methylesterase domain. Active-site residues include S156, H183, and D276.

It carries out the reaction [protein]-L-glutamate 5-O-methyl ester + H2O = L-glutamyl-[protein] + methanol + H(+). Functionally, probable methylesterase. Required for the normal aggregation of M.xanthus cells during fruiting body formation. It is also a component of a sensory transduction pathway that controls the frequency at which cells reverse their gliding direction. It may remove the methyl group from the gamma-glutamyl methyl ester residues in FrzCD. This is Protein-glutamate methylesterase FrzG (frzG) from Myxococcus xanthus.